Reading from the N-terminus, the 366-residue chain is Alanine racemase (366 aa).

K33 functions as the Proton acceptor; specific for D-alanine in the catalytic mechanism. K33 bears the N6-(pyridoxal phosphate)lysine mark. Position 129 (R129) interacts with substrate. Y253 functions as the Proton acceptor; specific for L-alanine in the catalytic mechanism. M301 is a substrate binding site.

Belongs to the alanine racemase family. Pyridoxal 5'-phosphate serves as cofactor.

The enzyme catalyses L-alanine = D-alanine. The protein operates within amino-acid biosynthesis; D-alanine biosynthesis; D-alanine from L-alanine: step 1/1. Functionally, catalyzes the interconversion of L-alanine and D-alanine. May also act on other amino acids. The polypeptide is Alanine racemase (alr) (Xanthomonas axonopodis pv. citri (strain 306)).